The primary structure comprises 512 residues: ATP synthase subunit alpha 2 (512 aa).

169 to 176 (GDRQTGKT) provides a ligand contact to ATP.

It belongs to the ATPase alpha/beta chains family. As to quaternary structure, F-type ATPases have 2 components, CF(1) - the catalytic core - and CF(0) - the membrane proton channel. CF(1) has five subunits: alpha(3), beta(3), gamma(1), delta(1), epsilon(1). CF(0) has three main subunits: a(1), b(2) and c(9-12). The alpha and beta chains form an alternating ring which encloses part of the gamma chain. CF(1) is attached to CF(0) by a central stalk formed by the gamma and epsilon chains, while a peripheral stalk is formed by the delta and b chains.

The protein localises to the cell inner membrane. It carries out the reaction ATP + H2O + 4 H(+)(in) = ADP + phosphate + 5 H(+)(out). Its function is as follows. Produces ATP from ADP in the presence of a proton gradient across the membrane. The alpha chain is a regulatory subunit. The polypeptide is ATP synthase subunit alpha 2 (Vibrio campbellii (strain ATCC BAA-1116)).